The following is a 134-amino-acid chain: Large ribosomal subunit protein mL41 (134 aa).

Residues 1 to 13 (MGFLTAVTQGLVR) constitute a mitochondrion transit peptide.

It belongs to the mitochondrion-specific ribosomal protein mL41 family. Component of the mitochondrial ribosome large subunit (39S) which comprises a 16S rRNA and about 50 distinct proteins. Interacts with BCL2. Was also identified in the 28S mitochondrial ribosome.

It is found in the mitochondrion. Component of the mitochondrial ribosome large subunit. Also involved in apoptosis and cell cycle. Enhances p53/TP53 stability, thereby contributing to p53/TP53-induced apoptosis in response to growth-inhibitory condition. Enhances p53/TP53 translocation to the mitochondria. Has the ability to arrest the cell cycle at the G1 phase, possibly by stabilizing the CDKN1A and CDKN1B (p27Kip1) proteins. The protein is Large ribosomal subunit protein mL41 (Mrpl41) of Rattus norvegicus (Rat).